The sequence spans 110 residues: Hydrogenase maturation factor HypA (110 aa).

His2 contributes to the Ni(2+) binding site. Zn(2+)-binding residues include Cys70, Cys73, Cys86, and Cys89.

Belongs to the HypA/HybF family.

Its function is as follows. Involved in the maturation of [NiFe] hydrogenases. Required for nickel insertion into the metal center of the hydrogenase. The chain is Hydrogenase maturation factor HypA from Geotalea daltonii (strain DSM 22248 / JCM 15807 / FRC-32) (Geobacter daltonii).